A 489-amino-acid polypeptide reads, in one-letter code: Probable cytosol aminopeptidase (489 aa).

Residues Lys-255 and Asp-260 each contribute to the Mn(2+) site. Residue Lys-267 is part of the active site. 3 residues coordinate Mn(2+): Asp-279, Asp-339, and Glu-341. The active site involves Arg-343.

It belongs to the peptidase M17 family. Mn(2+) serves as cofactor.

It is found in the cytoplasm. The catalysed reaction is Release of an N-terminal amino acid, Xaa-|-Yaa-, in which Xaa is preferably Leu, but may be other amino acids including Pro although not Arg or Lys, and Yaa may be Pro. Amino acid amides and methyl esters are also readily hydrolyzed, but rates on arylamides are exceedingly low.. It carries out the reaction Release of an N-terminal amino acid, preferentially leucine, but not glutamic or aspartic acids.. Functionally, presumably involved in the processing and regular turnover of intracellular proteins. Catalyzes the removal of unsubstituted N-terminal amino acids from various peptides. In Synechococcus sp. (strain CC9605), this protein is Probable cytosol aminopeptidase.